The primary structure comprises 399 residues: S-adenosylmethionine synthase (399 aa).

136–141 contacts ATP; it reads GTGSAD.

Belongs to the AdoMet synthase 2 family. Requires Mg(2+) as cofactor.

It catalyses the reaction L-methionine + ATP + H2O = S-adenosyl-L-methionine + phosphate + diphosphate. It participates in amino-acid biosynthesis; S-adenosyl-L-methionine biosynthesis; S-adenosyl-L-methionine from L-methionine: step 1/1. Its function is as follows. Catalyzes the formation of S-adenosylmethionine from methionine and ATP. The protein is S-adenosylmethionine synthase of Methanothrix thermoacetophila (strain DSM 6194 / JCM 14653 / NBRC 101360 / PT) (Methanosaeta thermophila).